The primary structure comprises 92 residues: Ribonuclease P protein component 1 (92 aa).

Belongs to the eukaryotic/archaeal RNase P protein component 1 family. In terms of assembly, consists of a catalytic RNA component and at least 4-5 protein subunits.

The protein resides in the cytoplasm. The catalysed reaction is Endonucleolytic cleavage of RNA, removing 5'-extranucleotides from tRNA precursor.. In terms of biological role, part of ribonuclease P, a protein complex that generates mature tRNA molecules by cleaving their 5'-ends. The polypeptide is Ribonuclease P protein component 1 (Staphylothermus marinus (strain ATCC 43588 / DSM 3639 / JCM 9404 / F1)).